A 546-amino-acid polypeptide reads, in one-letter code: Protein FAM124A (546 aa).

Disordered regions lie at residues 1–37 (MDPKAGGGGEEDDCVDSGAETGGSDYSHLSSTSSELS), 285–361 (KFPK…QRSK), and 488–546 (SSSS…EFYI). Residues 24–36 (SDYSHLSSTSSEL) show a composition bias toward low complexity. Basic residues predominate over residues 285-302 (KFPKPGRVHHSSEKKRHS). Composition is skewed to polar residues over residues 304-324 (PLPSTAVPSHTPGSSQQSPLN) and 347-361 (ANSTPNPPWSFQRSK). Residues 488-511 (SSSSATARAAPPAPSTSTLTDSSP) are compositionally biased toward low complexity.

Belongs to the FAM124 family.

The chain is Protein FAM124A (FAM124A) from Pongo abelii (Sumatran orangutan).